We begin with the raw amino-acid sequence, 368 residues long: 1-deoxy-D-xylulose 5-phosphate reductoisomerase (368 aa).

NADPH contacts are provided by T7, G8, S9, I10, G31, K32, N33, and N113. Residue K114 coordinates 1-deoxy-D-xylulose 5-phosphate. Position 115 (E115) interacts with NADPH. D133 lines the Mn(2+) pocket. Positions 134, 135, 158, and 181 each coordinate 1-deoxy-D-xylulose 5-phosphate. E135 contributes to the Mn(2+) binding site. G187 is a binding site for NADPH. The 1-deoxy-D-xylulose 5-phosphate site is built by S194, N199, K200, and E203. E203 provides a ligand contact to Mn(2+).

Belongs to the DXR family. It depends on Mg(2+) as a cofactor. Requires Mn(2+) as cofactor.

It catalyses the reaction 2-C-methyl-D-erythritol 4-phosphate + NADP(+) = 1-deoxy-D-xylulose 5-phosphate + NADPH + H(+). It participates in isoprenoid biosynthesis; isopentenyl diphosphate biosynthesis via DXP pathway; isopentenyl diphosphate from 1-deoxy-D-xylulose 5-phosphate: step 1/6. Catalyzes the NADPH-dependent rearrangement and reduction of 1-deoxy-D-xylulose-5-phosphate (DXP) to 2-C-methyl-D-erythritol 4-phosphate (MEP). The sequence is that of 1-deoxy-D-xylulose 5-phosphate reductoisomerase from Helicobacter pylori (strain J99 / ATCC 700824) (Campylobacter pylori J99).